Reading from the N-terminus, the 126-residue chain is Fluoride-specific ion channel FluC 2 (126 aa).

Helical transmembrane passes span 5–25, 44–64, 68–88, and 99–119; these read TALTVAIWIGVMLIGGIGSVL, GTLTVNITGAALLGFLAGLAL, AALLAGTGFVGAYTTFSTWML, and MVSALANIVVSVVLGLAAALL. The Na(+) site is built by Gly-78 and Thr-81.

Belongs to the fluoride channel Fluc/FEX (TC 1.A.43) family.

It is found in the cell membrane. It catalyses the reaction fluoride(in) = fluoride(out). Na(+) is not transported, but it plays an essential structural role and its presence is essential for fluoride channel function. In terms of biological role, fluoride-specific ion channel. Important for reducing fluoride concentration in the cell, thus reducing its toxicity. In Mycobacterium bovis (strain ATCC BAA-935 / AF2122/97), this protein is Fluoride-specific ion channel FluC 2.